Consider the following 648-residue polypeptide: TBC1 domain family member 17 (648 aa).

Positions 218-309 (DPYSTTFSSF…PELKNRIFSG (92 aa)) are required for interaction with OPTN. The disordered stretch occupies residues 240–259 (PQPEGAASDLPPPPDDEPEP). The 211-residue stretch at 310–520 (GLSPSLRREA…RLWEVLWTGL (211 aa)) folds into the Rab-GAP TBC domain. Residues 594–648 (LAPPAEPHSPSPTASPLPLSPTRAPPTPPPSTDTAPQPDSSLEILPEEEDEGADS) are disordered. Pro residues predominate over residues 597-624 (PAEPHSPSPTASPLPLSPTRAPPTPPPS). A phosphoserine mark is found at S602 and S604. T606 carries the phosphothreonine modification. S608 carries the post-translational modification Phosphoserine. A Phosphothreonine modification is found at T615. Low complexity predominate over residues 625–634 (TDTAPQPDSS). Acidic residues predominate over residues 638 to 648 (LPEEEDEGADS).

As to quaternary structure, interacts with OPTN; this interaction mediates TBC1D17 transient association with Rab8.

The protein resides in the cytoplasmic vesicle. It is found in the autophagosome. It localises to the cytoplasm. Its subcellular location is the recycling endosome. Its function is as follows. Probable RAB GTPase-activating protein that inhibits RAB8A/B function. Reduces Rab8 recruitment to tubules emanating from the endocytic recycling compartment (ERC) and inhibits Rab8-mediated endocytic trafficking, such as that of transferrin receptor (TfR). Involved in regulation of autophagy. The chain is TBC1 domain family member 17 from Homo sapiens (Human).